We begin with the raw amino-acid sequence, 300 residues long: Transcription initiation factor IIB (300 aa).

The segment at 2–34 adopts a TFIIB-type zinc-finger fold; sequence TKQKVCPVCGSTEFIYDPERGEIVCARCGYVIE. Zn(2+)-binding residues include Cys-7, Cys-10, Cys-26, and Cys-29. 2 repeat units span residues 114–197 and 210–291.

It belongs to the TFIIB family.

Functionally, stabilizes TBP binding to an archaeal box-A promoter. Also responsible for recruiting RNA polymerase II to the pre-initiation complex (DNA-TBP-TFIIB). The protein is Transcription initiation factor IIB of Pyrococcus horikoshii (strain ATCC 700860 / DSM 12428 / JCM 9974 / NBRC 100139 / OT-3).